The sequence spans 627 residues: (-)-alpha-pinene synthase 1, chloroplastic (627 aa).

Residues 1–36 (MALVSIAPLASKSCLHKSLSSSAHELKTICRTIPTL) constitute a chloroplast transit peptide. Residues Asp378, Asp382, and Asp530 each coordinate Mg(2+). The DDXXD motif signature appears at 378-382 (DDMYD).

Belongs to the terpene synthase family. Tpsd subfamily. The cofactor is Mg(2+). Requires Mn(2+) as cofactor.

The protein resides in the plastid. It localises to the chloroplast. It carries out the reaction (2E)-geranyl diphosphate = (1S,5S)-beta-pinene + diphosphate. It catalyses the reaction (2E)-geranyl diphosphate = (1S,5S)-alpha-pinene + diphosphate. Its pathway is terpene metabolism; oleoresin biosynthesis. Functionally, terpene synthase (TPS) involved in the biosynthesis of monoterpene natural products included in conifer oleoresin secretions and volatile emissions; these compounds contribute to biotic and abiotic stress defense against herbivores and pathogens. Catalyzes the conversion of (2E)-geranyl diphosphate (GPP) to (1S,5S)-beta-pinene. The chain is (-)-alpha-pinene synthase 1, chloroplastic from Picea sitchensis (Sitka spruce).